We begin with the raw amino-acid sequence, 466 residues long: Soluble pyridine nucleotide transhydrogenase (466 aa).

Residue 36–45 (ERYHNVGGGC) participates in FAD binding.

This sequence belongs to the class-I pyridine nucleotide-disulfide oxidoreductase family. The cofactor is FAD.

It localises to the cytoplasm. It carries out the reaction NAD(+) + NADPH = NADH + NADP(+). In terms of biological role, conversion of NADPH, generated by peripheral catabolic pathways, to NADH, which can enter the respiratory chain for energy generation. In Salmonella gallinarum (strain 287/91 / NCTC 13346), this protein is Soluble pyridine nucleotide transhydrogenase.